We begin with the raw amino-acid sequence, 468 residues long: 6-phosphogluconate dehydrogenase, decarboxylating (468 aa).

Residues 9-14 (GLAVMG), 32-34 (NRS), 73-75 (VQA), and asparagine 101 each bind NADP(+). Substrate contacts are provided by residues asparagine 101 and 127 to 129 (SGG). Lysine 182 serves as the catalytic Proton acceptor. 185–186 (HN) serves as a coordination point for substrate. The active-site Proton donor is the glutamate 189. Substrate contacts are provided by tyrosine 190, lysine 259, arginine 286, arginine 444, and histidine 450.

The protein belongs to the 6-phosphogluconate dehydrogenase family. Homodimer.

It catalyses the reaction 6-phospho-D-gluconate + NADP(+) = D-ribulose 5-phosphate + CO2 + NADPH. It participates in carbohydrate degradation; pentose phosphate pathway; D-ribulose 5-phosphate from D-glucose 6-phosphate (oxidative stage): step 3/3. Its function is as follows. Catalyzes the oxidative decarboxylation of 6-phosphogluconate to ribulose 5-phosphate and CO(2), with concomitant reduction of NADP to NADPH. In Staphylococcus aureus (strain COL), this protein is 6-phosphogluconate dehydrogenase, decarboxylating (gnd).